The primary structure comprises 247 residues: Membrane-spanning 4-domains subfamily A member 6D (247 aa).

The Cytoplasmic portion of the chain corresponds to 1 to 46 (MIPQVVTSETVTVISPNGISFPQTDKPQPSHQSQDSLKKHLKAEIK). The chain crosses the membrane as a helical span at residues 47 to 67 (VMAAIQIMCAVMVLSLGIILA). At 68-80 (SVPSNLHFTSVFS) the chain is on the extracellular side. The chain crosses the membrane as a helical span at residues 81–101 (ILLESGYPFVGALFFAISGIL). Residues 102 to 121 (SIVTEKKMTKPLVHSSLALS) are Cytoplasmic-facing. The helical transmembrane segment at 122 to 142 (ILSVLSALTGIAILSVSLAAL) threads the bilayer. The Extracellular segment spans residues 143–180 (EPALQQCKLAFTQLDTTQDAYHFFSPEPLNSCFVAKAA). The helical transmembrane segment at 181–201 (LTGVFSLMLISSVLELGLAVL) threads the bilayer. The Cytoplasmic segment spans residues 202–247 (TATLWWKQSSSAFSGNVIFLSQNSKNKSSVSSESLCNPTYENILTS). Ser-235 carries the phosphoserine modification.

Belongs to the MS4A family. Expressed in thymus, spleen, intestine, colon, testis, heart, liver, brain, kidney, peripheral lymph node and bone marrow.

The protein resides in the membrane. Functionally, may be involved in signal transduction as a component of a multimeric receptor complex. In Mus musculus (Mouse), this protein is Membrane-spanning 4-domains subfamily A member 6D (Ms4a6d).